The following is a 68-amino-acid chain: Large ribosomal subunit protein bL35 (68 aa).

The protein belongs to the bacterial ribosomal protein bL35 family.

This is Large ribosomal subunit protein bL35 from Orientia tsutsugamushi (strain Boryong) (Rickettsia tsutsugamushi).